An 835-amino-acid polypeptide reads, in one-letter code: Leucine--tRNA ligase (835 aa).

The 'HIGH' region signature appears at 42 to 52; sequence PYPSGRIHMGH. Positions 612-616 match the 'KMSKS' region motif; that stretch reads KMSKS. K615 contacts ATP.

This sequence belongs to the class-I aminoacyl-tRNA synthetase family.

It localises to the cytoplasm. It carries out the reaction tRNA(Leu) + L-leucine + ATP = L-leucyl-tRNA(Leu) + AMP + diphosphate. This chain is Leucine--tRNA ligase, found in Rhizorhabdus wittichii (strain DSM 6014 / CCUG 31198 / JCM 15750 / NBRC 105917 / EY 4224 / RW1) (Sphingomonas wittichii).